We begin with the raw amino-acid sequence, 508 residues long: MPPLAVLLLALALLCAWRLSYSQGPTGTGTGRPRSLPALPLVGSLLQLAGHPQLHLRLWRLQGRYGSLYGLWMGSHYVVVVNSYQHAREVLLKKGKAFAGRPRTVTTDLLSRGGKDIAFASYGPLWKFQRKLVHAALSMFGEGSVALEKIICREAASLCETLGAAQDMALDMAPELTRAVTNVVCSLCFNSSYRRGDPEFEAMLEYSQGIVDTVAKESLVDIFPWLQIFPNRDLALLKRCLKVRDQLLQQKFTEHKEAFCGDTVRDLMDALLQVRLNAENNSPLEPGLELTDDHLLMTVGDIFGAGVETTTTVLKWAVLYLLHYPEVQKKIQEEMDQKIGLARHPHLSDRPLLPYLEATISEGLRIRPVSPLLIPHVSLADTSIGEYSIPKGARVVINLWSVHHDEKEWDKPEEFNPGRFLDEQGQHIHSPSPSYLPFGAGIRVCLGEVLAKMELFLFLAWVLQRFTLECPQDQPLPSLEGKFGVVLQVQKFRVKARLREAWRGEMVR.

Cys-445 is a binding site for heme.

This sequence belongs to the cytochrome P450 family. It depends on heme as a cofactor.

The protein resides in the membrane. The catalysed reaction is a C21-steroid + reduced [NADPH--hemoprotein reductase] + O2 = a 17alpha-hydroxy-C21-steroid + oxidized [NADPH--hemoprotein reductase] + H2O + H(+). It carries out the reaction 17alpha-hydroxyprogesterone + reduced [NADPH--hemoprotein reductase] + O2 = androst-4-ene-3,17-dione + acetate + oxidized [NADPH--hemoprotein reductase] + H2O + 2 H(+). It catalyses the reaction 17alpha-hydroxypregnenolone + reduced [NADPH--hemoprotein reductase] + O2 = 3beta-hydroxyandrost-5-en-17-one + acetate + oxidized [NADPH--hemoprotein reductase] + H2O + 2 H(+). It participates in lipid metabolism; steroid biosynthesis. In terms of biological role, conversion of pregnenolone and progesterone to their 17-alpha-hydroxylated products and subsequently to dehydroepiandrosterone (DHEA) and androstenedione. Catalyzes both the 17-alpha-hydroxylation and the 17,20-lyase reaction. The protein is Steroid 17-alpha-hydroxylase/17,20 lyase (CYP17A1) of Gallus gallus (Chicken).